The chain runs to 962 residues: Putative primase C962R (962 aa).

In terms of domain architecture, SF3 helicase spans 607–775 (ELDARLWIMF…PDPNNSYEKK (169 aa)). 636–643 (GGGCNGKT) is an ATP binding site.

It belongs to the asfivirus helicase C962R family.

This African swine fever virus (isolate Pig/Kenya/KEN-50/1950) (ASFV) protein is Putative primase C962R.